The chain runs to 664 residues: L-type lectin-domain containing receptor kinase I.3 (664 aa).

Residues 1-21 form the signal peptide; that stretch reads MACRLYLALIFSCVYLICLSS. At 22–286 the chain is on the extracellular side; sequence QQETGFVYNG…PKEEKKKLSP (265 aa). Residues 24–257 are legume-lectin like; it reads ETGFVYNGFE…NHYILGWSFS (234 aa). N-linked (GlcNAc...) asparagine glycosylation is found at asparagine 55, asparagine 125, asparagine 128, asparagine 181, asparagine 204, asparagine 225, and asparagine 267. A helical transmembrane segment spans residues 287–307; the sequence is LLIGLVILLVIPVVMVLGGVY. At 308–664 the chain is on the cytoplasmic side; the sequence is WYRRKKYAEV…THTILDGHGR (357 aa). The Protein kinase domain maps to 342–619; it reads FRKDCRVGKG…LNQDLPLPIF (278 aa). ATP is bound by residues 348–356 and lysine 370; that span reads VGKGGFGEV. Aspartate 466 acts as the Proton acceptor in catalysis.

In the C-terminal section; belongs to the protein kinase superfamily. Ser/Thr protein kinase family. This sequence in the N-terminal section; belongs to the leguminous lectin family. Autophosphorylated on Ser and Thr residues. Mostly expressed in roots and flowers, and, to a lower extent, in leaves.

It localises to the cell membrane. The catalysed reaction is L-seryl-[protein] + ATP = O-phospho-L-seryl-[protein] + ADP + H(+). The enzyme catalyses L-threonyl-[protein] + ATP = O-phospho-L-threonyl-[protein] + ADP + H(+). Its function is as follows. Involved in resistance response to the pathogenic fungus Alternaria brassicicola. This chain is L-type lectin-domain containing receptor kinase I.3, found in Arabidopsis thaliana (Mouse-ear cress).